Consider the following 313-residue polypeptide: Ribosomal RNA small subunit methyltransferase I (313 aa).

Residues 1-23 (MASIQLARTTRGGDGVARADGTR) are disordered.

This sequence belongs to the methyltransferase superfamily. RsmI family.

The protein localises to the cytoplasm. It carries out the reaction cytidine(1402) in 16S rRNA + S-adenosyl-L-methionine = 2'-O-methylcytidine(1402) in 16S rRNA + S-adenosyl-L-homocysteine + H(+). Catalyzes the 2'-O-methylation of the ribose of cytidine 1402 (C1402) in 16S rRNA. This chain is Ribosomal RNA small subunit methyltransferase I, found in Micromonospora olivasterospora.